The primary structure comprises 363 residues: Apelin receptor B (363 aa).

Residues 1–38 are Extracellular-facing; that stretch reads MESEGFSATTEQYEYYDYANETGLQPCDETDWDFSYSL. Asparagine 20 carries N-linked (GlcNAc...) asparagine glycosylation. Disulfide bonds link cysteine 27–cysteine 287 and cysteine 109–cysteine 186. A helical transmembrane segment spans residues 39-59; sequence LPVFYMIVFVLGLSGNGVVIF. Residues 60–77 are Cytoplasmic-facing; the sequence is TVWKAKPKRRSADTYIGN. The helical transmembrane segment at 78–98 threads the bilayer; it reads LALADLAFVVTLPLWATYTAL. At 99 to 111 the chain is on the extracellular side; sequence GFHWPFGSALCKL. Residues 112–132 form a helical membrane-spanning segment; that stretch reads SSYLVLLNMFASVFCLTCLSF. At 133–152 the chain is on the cytoplasmic side; it reads DRYLAIVHSLSSAKLRSRSS. Residues 153–173 form a helical membrane-spanning segment; that stretch reads ILVSLAVIWLFSGLLALPSLI. Over 174-200 the chain is Extracellular; sequence LRDTRVEGNNTICDLDFSGVSSKENEN. The N-linked (GlcNAc...) asparagine glycan is linked to asparagine 182. A helical transmembrane segment spans residues 201–221; the sequence is FWIGGLSILTTVPGFLLPLLL. Over 222–249 the chain is Cytoplasmic; the sequence is MTIFYCFIGGKVTMHFQNLKKEEQKKKR. Residues 250–270 traverse the membrane as a helical segment; it reads LLKIIITLVVVFAICWLPFHI. The Extracellular portion of the chain corresponds to 271-297; that stretch reads LKTIHFLDLMGFLELSCSAQNIIVSLH. A helical transmembrane segment spans residues 298–318; it reads PYATCLAYVNSCLNPFLYAFF. Topologically, residues 319-363 are cytoplasmic; the sequence is DLRFRSQCFFFFGFKKVLQGHLSNTSSSLSAQTQKSEIHSLATKV.

This sequence belongs to the G-protein coupled receptor 1 family. In terms of tissue distribution, expressed in all blood vessels including the posterior cardinal vein, intersomitic veins and the vitelline vein network.

The protein localises to the cell membrane. In terms of biological role, g protein-coupled receptor for peptide hormones apelin (apln) and apelin receptor early endogenous ligand (apela), that plays a role in the regulation of normal cardiovascular function and fluid homeostasis. When acting as apelin receptor, activates both G(i) protein pathway that inhibits adenylate cyclase activity, and the beta-arrestin pathway that promotes internalization of the receptor. Also functions as mechanoreceptor that is activated by pathological stimuli in a G-protein-independent fashion to induce beta-arrestin signaling, hence eliciting cardiac hypertrophy. However, the presence of apelin ligand blunts cardiac hypertrophic induction from APLNR/APJ on response to pathological stimuli. Plays a key role in early development such as gastrulation, blood vessels formation and heart morphogenesis by acting as a receptor for apela hormone, promoting endoderm and mesendoderm cell migration and regulating the migration of cells fated to become myocardial progenitors, respectively. Promotes angioblast migration toward the embryonic midline, i.e. the position of the future vessel formation, during vasculogenesis. May promote sinus venosus (SV)-derived endothelial cells migration into the developing heart to promote coronary blood vessel development. Required for cardiovascular development, particularly for intersomitic vein angiogenesis by acting as a receptor for apln hormone. Also plays a role in various processes in adults such as regulation of blood vessel formation, blood pressure, heart contractility, and heart failure. Acts upstream of the i/o type of G-alpha proteins in the differentiation of endothelium, erythroid cells, myeloid cells and cardiomyocytes. This Xenopus laevis (African clawed frog) protein is Apelin receptor B (aplnr-b).